The primary structure comprises 225 residues: NAD(P)H-hydrate epimerase (225 aa).

Residues 9–209 form the YjeF N-terminal domain; it reads MQTIDNYTVE…DIGLLTPQDF (201 aa). 57–61 contacts (6S)-NADPHX; that stretch reads NNGAD. Residues N58 and D119 each coordinate K(+). (6S)-NADPHX contacts are provided by residues 123-129 and D152; that span reads GTGLNNL. Residue T155 participates in K(+) binding.

This sequence belongs to the NnrE/AIBP family. Requires K(+) as cofactor.

The enzyme catalyses (6R)-NADHX = (6S)-NADHX. It carries out the reaction (6R)-NADPHX = (6S)-NADPHX. In terms of biological role, catalyzes the epimerization of the S- and R-forms of NAD(P)HX, a damaged form of NAD(P)H that is a result of enzymatic or heat-dependent hydration. This is a prerequisite for the S-specific NAD(P)H-hydrate dehydratase to allow the repair of both epimers of NAD(P)HX. In Leuconostoc kimchii (strain IMSNU 11154 / KCTC 2386 / IH25), this protein is NAD(P)H-hydrate epimerase.